A 23-amino-acid chain; its full sequence is Alyteserin-1c (23 aa).

S23 is subject to Serine amide.

Expressed by the skin glands.

It is found in the secreted. The protein resides in the target cell membrane. In terms of biological role, antibacterial peptide with amphipathic alpha-helical structure that shows selective growth-inhibitory activity against Gram-negative bacteria but low hemolytic activity against human erythrocytes (LC(50)=145-220 uM). It is moderately active against the Gram-negative bacteria E.coli (MIC=25 uM), K.pneumoniae (MIC=50 uM), P.aeruginosa (MIC=25 uM), A.baumannii (MIC=6 uM), and is weaky active against the Gram-positive S.aureus (MIC=100-250 uM). The chain is Alyteserin-1c from Alytes obstetricans (Common midwife toad).